The chain runs to 356 residues: GDP-mannose 4,6 dehydratase (356 aa).

Residues 12-17 (GITGQD), 69-70 (DL), 91-95 (LGAQS), and Tyr-106 contribute to the NADP(+) site. Thr-138 is a catalytic residue. Catalysis depends on nucleophile residues Glu-140 and Tyr-162. Lys-166, His-192, and Arg-197 together coordinate NADP(+).

The protein belongs to the NAD(P)-dependent epimerase/dehydratase family. GDP-mannose 4,6-dehydratase subfamily. Requires NADP(+) as cofactor.

The catalysed reaction is GDP-alpha-D-mannose = GDP-4-dehydro-alpha-D-rhamnose + H2O. The protein operates within nucleotide-sugar biosynthesis; GDP-L-fucose biosynthesis via de novo pathway; GDP-L-fucose from GDP-alpha-D-mannose: step 1/2. Participates in the synthesis of GDP-L-fucose, catalyzing the conversion of GDP-D-mannose to GDP-4-dehydro-6-deoxy-D-mannose (GDP-4-dehydro-alpha-D-rhamnose) which is further catalyzed by GDP-L-fucose synthase (ger). GDP-L-fucose is important for the synthesis of fucosylated N-glycans which are expressed on the cell surface. This chain is GDP-mannose 4,6 dehydratase (gmd), found in Dictyostelium discoideum (Social amoeba).